A 141-amino-acid chain; its full sequence is Large ribosomal subunit protein uL11 (141 aa).

Belongs to the universal ribosomal protein uL11 family. In terms of assembly, part of the ribosomal stalk of the 50S ribosomal subunit. Interacts with L10 and the large rRNA to form the base of the stalk. L10 forms an elongated spine to which L12 dimers bind in a sequential fashion forming a multimeric L10(L12)X complex. Post-translationally, one or more lysine residues are methylated.

In terms of biological role, forms part of the ribosomal stalk which helps the ribosome interact with GTP-bound translation factors. The protein is Large ribosomal subunit protein uL11 of Nostoc sp. (strain PCC 7120 / SAG 25.82 / UTEX 2576).